Consider the following 172-residue polypeptide: Peptide methionine sulfoxide reductase MsrA (172 aa).

Cys14 is an active-site residue.

This sequence belongs to the MsrA Met sulfoxide reductase family.

It carries out the reaction L-methionyl-[protein] + [thioredoxin]-disulfide + H2O = L-methionyl-(S)-S-oxide-[protein] + [thioredoxin]-dithiol. It catalyses the reaction [thioredoxin]-disulfide + L-methionine + H2O = L-methionine (S)-S-oxide + [thioredoxin]-dithiol. Has an important function as a repair enzyme for proteins that have been inactivated by oxidation. Catalyzes the reversible oxidation-reduction of methionine sulfoxide in proteins to methionine. The chain is Peptide methionine sulfoxide reductase MsrA from Streptomyces coelicolor (strain ATCC BAA-471 / A3(2) / M145).